Reading from the N-terminus, the 999-residue chain is Translation initiation factor IF-2 (999 aa).

The tract at residues 50–407 (AFVNNTGSPA…RGQGQTVRLS (358 aa)) is disordered. Pro residues-rich tracts occupy residues 60–89 (PAAP…PPGG) and 96–121 (PMPP…PPQS). Residues 136 to 162 (VAAAEARAAALKAEQEAAVKAAQAARQ) show a composition bias toward low complexity. The span at 163–173 (QQRDNVRREPP) shows a compositional bias: basic and acidic residues. Residues 179-194 (RPGPRPGPGAMPPRPG) show a composition bias toward pro residues. A compositionally biased stretch (low complexity) spans 213-222 (GGRPPARGAG). Residues 244–266 (RPSPASMPPRPSPASMPPRPSPA) are compositionally biased toward pro residues. A compositionally biased stretch (gly residues) spans 275–367 (RPGGPGSGRP…GAAGAFGRPG (93 aa)). Basic residues predominate over residues 371 to 380 (TRGRKSKKQR). Positions 388 to 405 (SAPTMSSGAPRGQGQTVR) are enriched in polar residues. The 173-residue stretch at 490-662 (SRPPVVTVMG…VLLTADASLE (173 aa)) folds into the tr-type G domain. Residues 499 to 506 (GHVDHGKT) form a G1 region. 499 to 506 (GHVDHGKT) lines the GTP pocket. A G2 region spans residues 524 to 528 (GITQH). Positions 549-552 (DTPG) are G3. Residues 549-553 (DTPGH) and 603-606 (NKID) each bind GTP. Residues 603–606 (NKID) are G4. A G5 region spans residues 639 to 641 (AAK).

The protein belongs to the TRAFAC class translation factor GTPase superfamily. Classic translation factor GTPase family. IF-2 subfamily.

Its subcellular location is the cytoplasm. Functionally, one of the essential components for the initiation of protein synthesis. Protects formylmethionyl-tRNA from spontaneous hydrolysis and promotes its binding to the 30S ribosomal subunits. Also involved in the hydrolysis of GTP during the formation of the 70S ribosomal complex. The sequence is that of Translation initiation factor IF-2 from Salinispora tropica (strain ATCC BAA-916 / DSM 44818 / JCM 13857 / NBRC 105044 / CNB-440).